The chain runs to 818 residues: METIKRLIWPKKEIFVGDFAIGVNRTVPVDVFQLVCRVVLRYMRTGKIECESDSLSKFVVELLKTDCAAKWEWFMKRRQGGDYIVPLSIATIPLMPLLSCTTSVRAVSVGVLGCGFSSNIPIPRLSVPRKGLLLRLAAGLALAPICALAVYATLPREKLSVYKLRTEARTHMEDEKEATDCLVVESARELKGKDGEDLLTGSRMTKVVASTGRRRRTPYAAKVAQVARAKVGYLRNTPENRLIYQRVIIEIMDKDCVRYVDRDVILPMAIGCCFVYQDGVEESAALWGSQDSLGVKXGGLVRLPGVVTQINRDIPSDVLLPQEVLEVRTGPPIAKDRNIFMVAGCPSQARFLVHNHCLKNLKRGLVERVFCVEKDGKLTRTPQPTKGSFGRLSPFRKAVCEKVGVAHRLGYDGFLSYYSGAKLRTYTRAVESLHITPVSERDSHLTTFVKAEKISTSKGDPAPRVIQPRNPRYNVELGRYLRHMESKLMKAVDDVFGETTCIKGYTADEVGAIFRRKWDRFDKPVAIGLDASRFDQHCSVEALQYEHSFYRALYPGNKLLSKLLEWQLHNKGKGYVPDGTITYKKEGCRMSGDINTSLGNYLLMCAMVHGYMRHLGINEFSLANCGDDCVLIIERRNLKRVQGTLPGYFLNLGYTMKVESPVFQLEEVEFCQAHPVQFQGGWKMVRNVRTAMSKDVHCVNNIRDLATRRAWSNAQHHGGLALSAGIPVVERFYSRFPLYDMPVKHQRIDTVTNVHKWRGSGGNYHVTPESRASFWAAFGLTGDEQVALEDRLDRWEMDLFGREGVDAHEPSILDSAVA.

The RdRp catalytic domain maps to 524-641 (PVAIGLDASR…IIERRNLKRV (118 aa)).

It belongs to the tombusviridae RNA polymerase family.

It catalyses the reaction RNA(n) + a ribonucleoside 5'-triphosphate = RNA(n+1) + diphosphate. Functionally, RNA-dependent RNA polymerase that plays an essential role in the virus replication. This is RNA-directed RNA polymerase from Cymbidium (Creeping white clover).